Consider the following 257-residue polypeptide: Spindlin-2C (257 aa).

A disordered region spans residues Met1–Ile47. Residues Ile27 to Ser43 show a composition bias toward basic residues. Tudor-like domain stretches follow at residues Val48 to His97, Ile127 to Leu176, and Ile208 to Val253. Histone H3K4me3 and H3R8me2a binding stretches follow at residues Glu136 and Asp244–His246.

It belongs to the SPIN/STSY family. Interacts with C11orf84/SPINDOC.

It localises to the nucleus. Functionally, may be involved in the regulation of cell cycle progression. Exhibits H3K4me3-binding activity. The protein is Spindlin-2C (Spin2c) of Mus musculus (Mouse).